The following is a 119-amino-acid chain: NADH-quinone oxidoreductase subunit A (119 aa).

Helical transmembrane passes span 9 to 29 (VLLF…LGYV), 63 to 83 (LVAI…PWAV), and 88 to 108 (VGVT…VGFA).

The protein belongs to the complex I subunit 3 family. NDH-1 is composed of 14 different subunits. Subunits NuoA, H, J, K, L, M, N constitute the membrane sector of the complex.

It localises to the cell inner membrane. The catalysed reaction is a quinone + NADH + 5 H(+)(in) = a quinol + NAD(+) + 4 H(+)(out). Its function is as follows. NDH-1 shuttles electrons from NADH, via FMN and iron-sulfur (Fe-S) centers, to quinones in the respiratory chain. The immediate electron acceptor for the enzyme in this species is believed to be ubiquinone. Couples the redox reaction to proton translocation (for every two electrons transferred, four hydrogen ions are translocated across the cytoplasmic membrane), and thus conserves the redox energy in a proton gradient. This chain is NADH-quinone oxidoreductase subunit A, found in Acidovorax sp. (strain JS42).